A 206-amino-acid polypeptide reads, in one-letter code: ATP-dependent Clp protease proteolytic subunit 1 (206 aa).

The active-site Nucleophile is the Ser100. Residue His125 is part of the active site.

Belongs to the peptidase S14 family. As to quaternary structure, fourteen ClpP subunits assemble into 2 heptameric rings which stack back to back to give a disk-like structure with a central cavity, resembling the structure of eukaryotic proteasomes.

It localises to the cytoplasm. It catalyses the reaction Hydrolysis of proteins to small peptides in the presence of ATP and magnesium. alpha-casein is the usual test substrate. In the absence of ATP, only oligopeptides shorter than five residues are hydrolyzed (such as succinyl-Leu-Tyr-|-NHMec, and Leu-Tyr-Leu-|-Tyr-Trp, in which cleavage of the -Tyr-|-Leu- and -Tyr-|-Trp bonds also occurs).. Its function is as follows. Cleaves peptides in various proteins in a process that requires ATP hydrolysis. Has a chymotrypsin-like activity. Plays a major role in the degradation of misfolded proteins. In Myxococcus xanthus (strain DK1622), this protein is ATP-dependent Clp protease proteolytic subunit 1.